The primary structure comprises 262 residues: Glutamate racemase (262 aa).

Substrate is bound by residues 7-8 (DS) and 39-40 (YG). The Proton donor/acceptor role is filled by Cys70. 71-72 (NT) contacts substrate. Cys182 acts as the Proton donor/acceptor in catalysis. Position 183-184 (183-184 (TH)) interacts with substrate.

It belongs to the aspartate/glutamate racemases family.

The catalysed reaction is L-glutamate = D-glutamate. It functions in the pathway cell wall biogenesis; peptidoglycan biosynthesis. Provides the (R)-glutamate required for cell wall biosynthesis. The chain is Glutamate racemase from Campylobacter concisus (strain 13826).